Here is a 604-residue protein sequence, read N- to C-terminus: Aspartate--tRNA(Asp/Asn) ligase (604 aa).

Glu-169 lines the L-aspartate pocket. The aspartate stretch occupies residues 193 to 196; it reads QLFK. L-aspartate is bound at residue Arg-215. Residues 215–217 and Gln-224 contribute to the ATP site; that span reads RDE. His-456 contributes to the L-aspartate binding site. Residue Glu-490 coordinates ATP. Arg-497 serves as a coordination point for L-aspartate. ATP is bound at residue 542–545; that stretch reads GWDR. The interval 571–604 is disordered; that stretch reads PLTGAPAPITAQQRKEAGVDAQPEPKQAEAEPEA.

This sequence belongs to the class-II aminoacyl-tRNA synthetase family. Type 1 subfamily. Homodimer.

It is found in the cytoplasm. It carries out the reaction tRNA(Asx) + L-aspartate + ATP = L-aspartyl-tRNA(Asx) + AMP + diphosphate. Aspartyl-tRNA synthetase with relaxed tRNA specificity since it is able to aspartylate not only its cognate tRNA(Asp) but also tRNA(Asn). Reaction proceeds in two steps: L-aspartate is first activated by ATP to form Asp-AMP and then transferred to the acceptor end of tRNA(Asp/Asn). The sequence is that of Aspartate--tRNA(Asp/Asn) ligase from Micrococcus luteus (strain ATCC 4698 / DSM 20030 / JCM 1464 / CCM 169 / CCUG 5858 / IAM 1056 / NBRC 3333 / NCIMB 9278 / NCTC 2665 / VKM Ac-2230) (Micrococcus lysodeikticus).